The sequence spans 1577 residues: Dynamin-binding protein (1577 aa).

Met1 bears the N-acetylmethionine mark. 3 SH3 domains span residues 2-61 (EPGS…IVTI), 66-126 (EGER…ELCL), and 145-204 (YSMG…LLGP). Residues 209–242 (DESVNAGSGDDSTLNDEVDVSPEEVESEGDEDDQ) form a disordered region. Over residues 221–242 (TLNDEVDVSPEEVESEGDEDDQ) the composition is skewed to acidic residues. The SH3 4 domain maps to 243–302 (QAGTYGIALYRFQALESNELDFEVGDKIRILGTLEDGWLEGRLKGKTGIFPHRFVKLCPS). Disordered regions lie at residues 307–361 (ETMA…EEPL) and 375–437 (GQDE…SRQC). Over residues 400-410 (PDLSQEVNGIS) the composition is skewed to polar residues. Ser494 is subject to Phosphoserine. 2 disordered regions span residues 519–547 (PERP…DNLD) and 590–681 (RGSS…SEYT). Positions 617–626 (TPTSTSPHLL) are enriched in low complexity. Over residues 632–651 (KPGPPLVVRPSRPAPLPPPT) the composition is skewed to pro residues. Residues 652–662 (QQRLNTASPKP) are compositionally biased toward polar residues. Residues 672 to 681 (APEKEGSEYT) are compositionally biased toward basic and acidic residues. At Ser684 the chain carries Phosphoserine. Positions 705 to 755 (LDMHTRAQEELNLLLEEKQDESLRAETLETLKSYESTIQSLNLELQQLREM) form a coiled coil. Residues 784 to 967 (KRAKVVAELL…KEINANINEY (184 aa)) form the DH domain. In terms of domain architecture, BAR spans 1008–1217 (LKHLTGFAPQ…LKASDREGNL (210 aa)). The 64-residue stretch at 1285–1348 (PPEKLFHVQR…YSSFLKPYNP (64 aa)) folds into the SH3 5 domain. The span at 1353–1375 (SDSSVVSHSSTESEHSGSSPSFH) shows a compositional bias: low complexity. 2 disordered regions span residues 1353–1381 (SDSS…NSSS) and 1415–1510 (ETLG…LGSS). 2 stretches are compositionally biased toward polar residues: residues 1418 to 1428 (GVSSNTGNPET) and 1484 to 1497 (DQGS…SRAC). The SH3 6 domain occupies 1513–1576 (EGNQVYFAIY…PSNYIRKTEY (64 aa)).

In terms of assembly, binds DNM1 via its N-terminal SH3 domains. The C-terminal SH3 domain binds a complex containing actin, tubulin, Hsp70 and actin-regulatory proteins, such as ENAH, EVL, WIRE, CR16, WAVE1 and NAP1L1. Interacts with FASLG. Interacts (via SH3 domain 6) with WASL. Interacts (via SH3 domain 6) interacts with ENAH. Interacts (via C-terminal domain) with TJP1; required for the apical cell-cell junction localization of DNMBP. Widely expressed.

Its subcellular location is the cytoplasm. It is found in the golgi apparatus. The protein localises to the golgi stack. It localises to the cytoskeleton. The protein resides in the synapse. Its subcellular location is the cell junction. Its function is as follows. Plays a critical role as a guanine nucleotide exchange factor (GEF) for CDC42 in several intracellular processes associated with the actin and microtubule cytoskeleton. Regulates the structure of apical junctions in epithelial cells. Participates in the normal lumenogenesis of epithelial cell cysts by regulating spindle orientation. Plays a role in ciliogenesis. May play a role in membrane trafficking between the cell surface and the Golgi. The polypeptide is Dynamin-binding protein (Rattus norvegicus (Rat)).